Reading from the N-terminus, the 520-residue chain is Alpha-1B adrenergic receptor (520 aa).

At 1–45 the chain is on the extracellular side; that stretch reads MNPDLDTGHNTSAPAHWGELKNANFTGPNQTSSNSTLPQLDITRA. Residues asparagine 10, asparagine 24, asparagine 29, and asparagine 34 are each glycosylated (N-linked (GlcNAc...) asparagine). A helical membrane pass occupies residues 46-70; sequence ISVGLVLGAFILFAIVGNILVILSV. The Cytoplasmic portion of the chain corresponds to 71–83; it reads ACNRHLRTPTNYF. The helical transmembrane segment at 84 to 105 threads the bilayer; it reads IVNLAMADLLLSFTVLPFSAAL. The Extracellular segment spans residues 106–115; that stretch reads EVLGYWVLGR. A helical membrane pass occupies residues 116-141; the sequence is IFCDIWAAVDVLCCTASILSLCAISI. Residues cysteine 118 and cysteine 195 are joined by a disulfide bond. Residues 142–161 lie on the Cytoplasmic side of the membrane; the sequence is DRYIGVRYSLQYPTLVTRRK. Residues 162–184 traverse the membrane as a helical segment; sequence AILALLSVWVLSTVISIGPLLGW. Residues 185–201 are Extracellular-facing; sequence KEPAPNDDKECGVTEEP. A helical membrane pass occupies residues 202-224; it reads FYALFSSLGSFYIPLAVILVMYC. At 225-295 the chain is on the cytoplasmic side; the sequence is RVYIVAKRTT…FSREKKAAKT (71 aa). At threonine 264 the chain carries Phosphothreonine. Residues 296–319 traverse the membrane as a helical segment; that stretch reads LGIVVGMFILCWLPFFIALPLGSL. At 320 to 326 the chain is on the extracellular side; sequence FSTLKPP. A helical transmembrane segment spans residues 327–351; it reads DAVFKVVFWLGYFNSCLNPIIYPCS. Residues 352-520 are Cytoplasmic-facing; sequence SKEFKRAFVR…SNMPLAPGQF (169 aa). Cysteine 365 carries the S-palmitoyl cysteine lipid modification. Positions 368–380 match the Nuclear localization signal motif; the sequence is RGRGRRRRRRRRR. Disordered stretches follow at residues 394 to 432 and 479 to 520; these read GGSL…GYLG and LTEP…PGQF.

Belongs to the G-protein coupled receptor 1 family. Adrenergic receptor subfamily. ADRA1B sub-subfamily. As to quaternary structure, homo- and heterooligomer. Heterooligomerizes with ADRA1B homooligomers in cardiac myocytes. Interacts with CAVIN4.

Its subcellular location is the nucleus membrane. The protein localises to the cell membrane. It localises to the cytoplasm. It is found in the membrane. The protein resides in the caveola. Its function is as follows. This alpha-adrenergic receptor mediates its action by association with G proteins that activate a phosphatidylinositol-calcium second messenger system. Its effect is mediated by G(q) and G(11) proteins. Nuclear ADRA1A-ADRA1B heterooligomers regulate phenylephrine (PE)-stimulated ERK signaling in cardiac myocytes. The protein is Alpha-1B adrenergic receptor (ADRA1B) of Homo sapiens (Human).